The chain runs to 664 residues: E3 ubiquitin-protein ligase CHFR (664 aa).

In terms of domain architecture, FHA spans tryptophan 38–valine 89. Disordered stretches follow at residues leucine 170–serine 220 and glutamate 245–glutamate 264. Polar residues predominate over residues glutamine 174–histidine 202. The segment covering serine 203–proline 215 has biased composition (low complexity). Residues glutamate 245 to glycine 263 are compositionally biased toward basic and acidic residues. Residues cysteine 303 to arginine 342 form an RING-type zinc finger. Threonine 385 is subject to Phosphothreonine. The tract at residues leucine 389 to valine 413 is disordered. Residues aspartate 399–valine 413 show a composition bias toward acidic residues. A PBZ-type zinc finger spans residues proline 633–histidine 655.

The protein belongs to the CHFR family. In terms of assembly, interacts with HDAC1 and HDAC2. Interacts with PML (with sumoylated form of PML). In terms of processing, poly-ADP-ribosylated. In addition to binding non covalently poly(ADP-ribose) via its PBZ-type zinc finger, the protein is also covalently poly-ADP-ribosylated by PARP1. Post-translationally, autoubiquitinated; may regulate its cellular level. Phosphorylated by PKB. Phosphorylation may affect its E3 ligase activity.

The protein resides in the nucleus. It is found in the PML body. The catalysed reaction is S-ubiquitinyl-[E2 ubiquitin-conjugating enzyme]-L-cysteine + [acceptor protein]-L-lysine = [E2 ubiquitin-conjugating enzyme]-L-cysteine + N(6)-ubiquitinyl-[acceptor protein]-L-lysine.. It functions in the pathway protein modification; protein ubiquitination. Functionally, E3 ubiquitin-protein ligase that functions in the antephase checkpoint by actively delaying passage into mitosis in response to microtubule poisons. Acts in early prophase before chromosome condensation, when the centrosome move apart from each other along the periphery of the nucleus. Probably involved in signaling the presence of mitotic stress caused by microtubule poisons by mediating the 'Lys-48'-linked ubiquitination of target proteins, leading to their degradation by the proteasome. Promotes the ubiquitination and subsequent degradation of AURKA and PLK1. Probably acts as a tumor suppressor, possibly by mediating the polyubiquitination of HDAC1, leading to its degradation. May also promote the formation of 'Lys-63'-linked polyubiquitin chains and functions with the specific ubiquitin-conjugating UBC13-MMS2 (UBE2N-UBE2V2) heterodimer. Substrates that are polyubiquitinated at 'Lys-63' are usually not targeted for degradation, but are rather involved in signaling cellular stress. The sequence is that of E3 ubiquitin-protein ligase CHFR (Chfr) from Mus musculus (Mouse).